A 574-amino-acid polypeptide reads, in one-letter code: Putative diflavin flavoprotein A 3 (574 aa).

Residues 43–236 form a zinc metallo-hydrolase region; it reads QNGTTYNSFL…PSVKMIATGH (194 aa). Fe cation is bound by residues His-92, Glu-94, Asp-96, His-159, Asp-178, and His-236. Positions 265–409 constitute a Flavodoxin-like domain; it reads IGVFYVSEYG…DLGQWVTRDR (145 aa). The segment at 410–574 is flavodoxin-reductase-like; it reads SIKAMKSLGA…VHHRKVGNHY (165 aa).

In the N-terminal section; belongs to the zinc metallo-hydrolase group 3 family. This sequence in the C-terminal section; belongs to the flavodoxin reductase family. Fe cation is required as a cofactor.

In terms of biological role, mediates electron transfer from NADH to oxygen, reducing it to water. This modular protein has 3 redox cofactors, in other organisms the same activity requires 2 or 3 proteins. The polypeptide is Putative diflavin flavoprotein A 3 (dfa3) (Nostoc sp. (strain PCC 7120 / SAG 25.82 / UTEX 2576)).